The primary structure comprises 154 residues: Large ribosomal subunit protein uL23z (154 aa).

It belongs to the universal ribosomal protein uL23 family.

Its function is as follows. Binds to a specific region on the 26S rRNA. In Arabidopsis thaliana (Mouse-ear cress), this protein is Large ribosomal subunit protein uL23z (RPL23AA).